The sequence spans 441 residues: Serine carboxypeptidase-like 4 (441 aa).

Positions 1 to 29 (MANNNVYSVLKSLLLLLHLVFLSKQHVDS) are cleaved as a signal peptide. 3 disulfides stabilise this stretch: Cys-88/Cys-331, Cys-252/Cys-266, and Cys-290/Cys-297. An N-linked (GlcNAc...) asparagine glycan is attached at Asn-109. Residue Ser-184 is part of the active site. The N-linked (GlcNAc...) asparagine glycan is linked to Asn-350. Asp-366 is an active-site residue. An N-linked (GlcNAc...) asparagine glycan is attached at Asn-382. His-419 is an active-site residue.

Belongs to the peptidase S10 family. In terms of tissue distribution, ubiquitous.

Its subcellular location is the secreted. Its function is as follows. Probable carboxypeptidase. The chain is Serine carboxypeptidase-like 4 (SCPL4) from Arabidopsis thaliana (Mouse-ear cress).